The primary structure comprises 70 residues: Protein tam14 (70 aa).

Positions 1–19 (MPTVQTPSQRRANTQFQKN) are enriched in polar residues. The segment at 1-20 (MPTVQTPSQRRANTQFQKNI) is disordered. A helical transmembrane segment spans residues 45–65 (IAMFFILLMSGGIILGILRFL).

Belongs to the RAMP4 family.

The protein resides in the membrane. Its subcellular location is the endoplasmic reticulum membrane. In terms of biological role, interacts with target proteins during their translocation into the lumen of the endoplasmic reticulum. Protects unfolded target proteins against degradation during ER stress. May facilitate glycosylation of target proteins after termination of ER stress. This Schizosaccharomyces pombe (strain 972 / ATCC 24843) (Fission yeast) protein is Protein tam14 (tam14).